The following is a 718-amino-acid chain: F-box/LRR-repeat protein 18 (718 aa).

Residues 25 to 72 form the F-box domain; sequence GVHLLGFSDEILLHILSHVPSTDLILNVRRTCRKLAALCLDKSLIHTV. LRR repeat units lie at residues 77-103, 104-128, 129-153, 177-201, 324-352, 367-392, 393-422, 468-492, 516-540, 542-567, 572-597, and 599-623; these read DYQASEDKVRQLVKEIGREIQQLSMAG, CYWLPGSTVEHVARCRSLVKVNLSG, CHLTSLRLSKMLSALQHLRSLAIDV, KQTLFTPSYGVVPCCTSLEKLLLYF, CTLSGGHLIQQVINGGKDLRSLASLNLSG, EDDIDSSILETLVASCCNLRHLNLSA, AHHHSSEGLGRHLCQLLARLRHLRSLSLPV, CPQPSSVFWSLLKNLPFLEHLELIG, AQSVGDSEVAAIGQLAFLRHLTLAQ, PSVLTGSGLVNIGLQCQQLRSLSLAN, GKVVYMPALSDMLKHCKRLRDLRLEQ, and YFSANAQFFQALSQCPSLQRLCLVS.

In terms of assembly, directly interacts with SKP1 and CUL1.

In terms of biological role, substrate-recognition component of the SCF (SKP1-CUL1-F-box protein)-type E3 ubiquitin ligase complex. The sequence is that of F-box/LRR-repeat protein 18 (FBXL18) from Homo sapiens (Human).